Consider the following 220-residue polypeptide: MAKNRFNQHWLHDHINDPYVKMAQREGYRARAAYKLKEIDEQDKLIRPGQVIVDLGATPGSWSQYARNKLAQGKKRDTQREGGIDGTIIALDLLPMEPIADVHFIQGDFREDDVLRQLEDVLEGRAVDLVISDMAPNLSGVASADAARIEHLCDLALEFAQNHLKPDGALLVKCFHGSGYSQIVEKFKQQFKVVAPRKPKASRDKSSETFILGRQLKQPR.

S-adenosyl-L-methionine contacts are provided by Gly-60, Trp-62, Asp-92, Asp-108, and Asp-133. The active-site Proton acceptor is Lys-173. The interval 197–220 (RKPKASRDKSSETFILGRQLKQPR) is disordered.

This sequence belongs to the class I-like SAM-binding methyltransferase superfamily. RNA methyltransferase RlmE family.

It is found in the cytoplasm. The enzyme catalyses uridine(2552) in 23S rRNA + S-adenosyl-L-methionine = 2'-O-methyluridine(2552) in 23S rRNA + S-adenosyl-L-homocysteine + H(+). In terms of biological role, specifically methylates the uridine in position 2552 of 23S rRNA at the 2'-O position of the ribose in the fully assembled 50S ribosomal subunit. This Burkholderia ambifaria (strain MC40-6) protein is Ribosomal RNA large subunit methyltransferase E.